Consider the following 307-residue polypeptide: Oxygen-dependent coproporphyrinogen-III oxidase (307 aa).

Serine 99 is a substrate binding site. Positions 103 and 113 each coordinate a divalent metal cation. Catalysis depends on histidine 113, which acts as the Proton donor. Position 115 to 117 (115 to 117) interacts with substrate; it reads NVR. Residues histidine 152 and histidine 182 each coordinate a divalent metal cation. Residues 247–282 are important for dimerization; it reads YVEFNLVFDRGTLFGLQSGGRTESILMSMPPVVNWR. A substrate-binding site is contributed by 265–267; that stretch reads GGR.

This sequence belongs to the aerobic coproporphyrinogen-III oxidase family. As to quaternary structure, homodimer. A divalent metal cation serves as cofactor.

Its subcellular location is the cytoplasm. It carries out the reaction coproporphyrinogen III + O2 + 2 H(+) = protoporphyrinogen IX + 2 CO2 + 2 H2O. It participates in porphyrin-containing compound metabolism; protoporphyrin-IX biosynthesis; protoporphyrinogen-IX from coproporphyrinogen-III (O2 route): step 1/1. Functionally, involved in the heme biosynthesis. Catalyzes the aerobic oxidative decarboxylation of propionate groups of rings A and B of coproporphyrinogen-III to yield the vinyl groups in protoporphyrinogen-IX. The sequence is that of Oxygen-dependent coproporphyrinogen-III oxidase from Paraburkholderia xenovorans (strain LB400).